The sequence spans 351 residues: Cytochrome c biogenesis protein CcsA (351 aa).

The next 8 membrane-spanning stretches (helical) occupy residues V17–I37, N38–A58, L68–I88, L97–L117, M143–I163, I259–N279, W286–L306, and A320–L340.

This sequence belongs to the CcmF/CycK/Ccl1/NrfE/CcsA family. May interact with ccs1.

It localises to the cellular thylakoid membrane. Its function is as follows. Required during biogenesis of c-type cytochromes (cytochrome c6 and cytochrome f) at the step of heme attachment. This Nostoc sp. (strain PCC 7120 / SAG 25.82 / UTEX 2576) protein is Cytochrome c biogenesis protein CcsA.